The following is a 358-amino-acid chain: Endo-1,4-beta-xylanase B (358 aa).

The N-terminal stretch at 1–17 (MRFSASLLLALTGSAAA) is a signal peptide. The region spanning 40–352 (QGLDAAMKAA…KAAYNAFLRG (313 aa)) is the GH10 domain. Asn-136 is a glycosylation site (N-linked (GlcNAc...) asparagine). Glu-166 acts as the Proton donor in catalysis. The active-site Nucleophile is the Glu-274.

It belongs to the glycosyl hydrolase 10 (cellulase F) family.

Its subcellular location is the secreted. The enzyme catalyses Endohydrolysis of (1-&gt;4)-beta-D-xylosidic linkages in xylans.. It participates in glycan degradation; xylan degradation. With respect to regulation, partial inhibition of activity is detected in the presence of Ag(+), Cu2(+) and SDS. Like most fungal xylanases, activity is completely inhibited by Hg(2+) since Hg(2+) could interact with tryptophan residues and oxidize the indole ring. Beta-mercaptoethanol enhances the enzymatic activity by counteracting the oxidation effects of the S-S linkage between cysteine residues. In terms of biological role, endo-1,4-beta-xylanase involved in the hydrolysis of xylan, a major structural heterogeneous polysaccharide found in plant biomass representing the second most abundant polysaccharide in the biosphere, after cellulose. Is more active on soluble wheat arabinoxylan (defined as 100%) than on birchwood xylan (75.4%) and beechwood xylan (70.8%), and less active on insoluble wheat arabinoxylan (17.4%). Xylose is the major hydrolysis product of XynB. This Humicola insolens (Soft-rot fungus) protein is Endo-1,4-beta-xylanase B.